The following is a 514-amino-acid chain: ATP synthase subunit alpha (514 aa).

170-177 (GDRQIGKS) serves as a coordination point for ATP.

It belongs to the ATPase alpha/beta chains family. In terms of assembly, F-type ATPases have 2 components, CF(1) - the catalytic core - and CF(0) - the membrane proton channel. CF(1) has five subunits: alpha(3), beta(3), gamma(1), delta(1), epsilon(1). CF(0) has three main subunits: a(1), b(2) and c(9-12). The alpha and beta chains form an alternating ring which encloses part of the gamma chain. CF(1) is attached to CF(0) by a central stalk formed by the gamma and epsilon chains, while a peripheral stalk is formed by the delta and b chains.

The protein resides in the cell inner membrane. The enzyme catalyses ATP + H2O + 4 H(+)(in) = ADP + phosphate + 5 H(+)(out). Produces ATP from ADP in the presence of a proton gradient across the membrane. The alpha chain is a regulatory subunit. The chain is ATP synthase subunit alpha from Chromohalobacter salexigens (strain ATCC BAA-138 / DSM 3043 / CIP 106854 / NCIMB 13768 / 1H11).